Consider the following 477-residue polypeptide: SH3 domain-binding protein 5 homolog (477 aa).

Residues 12-95 adopt a coiled-coil conformation; sequence QIQIELENLN…AAVKFQRANE (84 aa). Phosphoserine occurs at positions 113 and 115. A coiled-coil region spans residues 122-221; that stretch reads NAWQEMLNHA…YSTALRNLER (100 aa). Disordered stretches follow at residues 224–258 and 276–306; these read EDIHRQRGDFPTPPGPREPGVGAELNSPTSSALPS and GSQMSLGAKTPQAAAETEDEEDACDYDETGA. A compositionally biased stretch (acidic residues) spans 291–305; sequence ETEDEEDACDYDETG.

It belongs to the SH3BP5 family.

The chain is SH3 domain-binding protein 5 homolog (pcs) from Drosophila melanogaster (Fruit fly).